The sequence spans 260 residues: NAD-dependent protein deacetylase (260 aa).

The Deacetylase sirtuin-type domain occupies 9–260 (DDIDGETLDA…QVLPAIVERL (252 aa)). Positions 35, 39, 46, 47, 114, 116, 117, and 132 each coordinate NAD(+). Nicotinamide is bound at residue phenylalanine 46. The nicotinamide site is built by isoleucine 116 and aspartate 117. Catalysis depends on histidine 132, which acts as the Proton acceptor. Zn(2+) is bound by residues cysteine 140, cysteine 143, cysteine 166, and cysteine 168. Positions 206, 207, 231, 248, and 249 each coordinate NAD(+).

Belongs to the sirtuin family. Class U subfamily. It depends on Zn(2+) as a cofactor.

It is found in the cytoplasm. It carries out the reaction N(6)-acetyl-L-lysyl-[protein] + NAD(+) + H2O = 2''-O-acetyl-ADP-D-ribose + nicotinamide + L-lysyl-[protein]. NAD-dependent protein deacetylase which modulates the activities of several enzymes which are inactive in their acetylated form. Deacetylates the N-terminal lysine residue of Alba, the major archaeal chromatin protein and that, in turn, increases Alba's DNA binding affinity, thereby repressing transcription. The polypeptide is NAD-dependent protein deacetylase (Haloarcula marismortui (strain ATCC 43049 / DSM 3752 / JCM 8966 / VKM B-1809) (Halobacterium marismortui)).